Here is a 199-residue protein sequence, read N- to C-terminus: MFTQNHFEIFSIDGLEARMAEIRSEIQPVFSEIGQKLLTKLSAKISNQEFYFHIAQHRRRTANAPENTWSAISTKARGYKMEAHFQLGIWEDYVFIYLSMIDQPKKQKEYAELLTNLSVEKMLTEDFIISKDHTKAEVFPLSAFSEAAERLGKVKKSELEIGRLWSKERFDGKEDSKILAEMLETIDQLLPIYQKLMEV.

This sequence belongs to the UPF0637 family.

This Lactococcus lactis subsp. cremoris (strain SK11) protein is UPF0637 protein LACR_1918.